The following is a 241-amino-acid chain: 1-(5-phosphoribosyl)-5-[(5-phosphoribosylamino)methylideneamino] imidazole-4-carboxamide isomerase (241 aa).

The active-site Proton acceptor is the D8. The Proton donor role is filled by D129.

This sequence belongs to the HisA/HisF family.

Its subcellular location is the cytoplasm. The enzyme catalyses 1-(5-phospho-beta-D-ribosyl)-5-[(5-phospho-beta-D-ribosylamino)methylideneamino]imidazole-4-carboxamide = 5-[(5-phospho-1-deoxy-D-ribulos-1-ylimino)methylamino]-1-(5-phospho-beta-D-ribosyl)imidazole-4-carboxamide. Its pathway is amino-acid biosynthesis; L-histidine biosynthesis; L-histidine from 5-phospho-alpha-D-ribose 1-diphosphate: step 4/9. This is 1-(5-phosphoribosyl)-5-[(5-phosphoribosylamino)methylideneamino] imidazole-4-carboxamide isomerase from Rhodospirillum rubrum (strain ATCC 11170 / ATH 1.1.1 / DSM 467 / LMG 4362 / NCIMB 8255 / S1).